A 184-amino-acid polypeptide reads, in one-letter code: Translation initiation factor IF-3 (184 aa).

Belongs to the IF-3 family. Monomer.

It localises to the cytoplasm. In terms of biological role, IF-3 binds to the 30S ribosomal subunit and shifts the equilibrium between 70S ribosomes and their 50S and 30S subunits in favor of the free subunits, thus enhancing the availability of 30S subunits on which protein synthesis initiation begins. The chain is Translation initiation factor IF-3 from Hamiltonella defensa subsp. Acyrthosiphon pisum (strain 5AT).